The chain runs to 147 residues: Diaminohydroxyphosphoribosylamino-pyrimidine deaminase (147 aa).

A CMP/dCMP-type deaminase domain is found at 1–123; the sequence is MNDIFYMKRA…YLKKHGICVK (123 aa). Histidine 50 contributes to the Zn(2+) binding site. Glutamate 52 (proton donor) is an active-site residue. Residues cysteine 75 and cysteine 84 each contribute to the Zn(2+) site.

Belongs to the cytidine and deoxycytidylate deaminase family. The cofactor is Zn(2+).

It catalyses the reaction 2,5-diamino-6-hydroxy-4-(5-phosphoribosylamino)-pyrimidine + H2O + H(+) = 5-amino-6-(5-phospho-D-ribosylamino)uracil + NH4(+). It participates in cofactor biosynthesis; riboflavin biosynthesis; 5-amino-6-(D-ribitylamino)uracil from GTP: step 2/4. The sequence is that of Diaminohydroxyphosphoribosylamino-pyrimidine deaminase (ribD1) from Buchnera aphidicola subsp. Acyrthosiphon pisum (strain APS) (Acyrthosiphon pisum symbiotic bacterium).